A 622-amino-acid polypeptide reads, in one-letter code: Probable potassium transport system protein Kup (622 aa).

The next 12 helical transmembrane spans lie at 8–28 (LAALTLGAIGVVYGDIGTSVL), 50–70 (VLSILFWTLTTIVSLKYVVLV), 103–123 (LGIGVFGTSLFYGDGVITPAI), 137–157 (PHFGKAVIPLTLIVLFCLFAV), 169–189 (FGPVTLVWFTSIAALGVPHIV), 215–235 (FIILGAVVLCVTGAEALYADL), 247–267 (WFSVAMPALTINYFGQGALLL), 285–305 (ALIPLVIMATMATVIASQALI), 337–357 (IYIPFVNWALFLAIVLAVVMF), 366–386 (AYGIAVTLDMLITTVLTFFVI), 393–413 (PLALCIAATGFFFLVDLAFFG), and 419–439 (LLQGGWFPLMIGSIVFMLMMT).

This sequence belongs to the HAK/KUP transporter (TC 2.A.72) family.

Its subcellular location is the cell inner membrane. The catalysed reaction is K(+)(in) + H(+)(in) = K(+)(out) + H(+)(out). Its function is as follows. Transport of potassium into the cell. Likely operates as a K(+):H(+) symporter. The chain is Probable potassium transport system protein Kup from Paracidovorax citrulli (strain AAC00-1) (Acidovorax citrulli).